We begin with the raw amino-acid sequence, 144 residues long: Large ribosomal subunit protein uL13 (144 aa).

This sequence belongs to the universal ribosomal protein uL13 family. As to quaternary structure, part of the 50S ribosomal subunit.

Functionally, this protein is one of the early assembly proteins of the 50S ribosomal subunit, although it is not seen to bind rRNA by itself. It is important during the early stages of 50S assembly. This is Large ribosomal subunit protein uL13 from Buchnera aphidicola subsp. Baizongia pistaciae (strain Bp).